The primary structure comprises 550 residues: MSYLPLYNNNNNINNNNNNNNNRINNNKEKGVKNKPFQIFISIVFIVFLCFFLIWSMEAKKDKNIKINKISNIDQKNSPNLINEPINNNKNNKNNIPKNHKQFKNKKGLIKSFQYEPFAYKALRNEDGFEISIVTHVPIENMEKIAMIADIWRAPISASVLIKNKNDIDSVYKLIRNSLSVSEFVDFHFLYWNEDSDSIINNNNNNIINKNKINTNEEDNLNYYYYPINSLRNLSLKNSKTDWILTIDIDYLPNYGIYQYLERTLYTSLQPSKKLINSDLVSFVVPSFQLTSISTKTAPTTISTQSPTPISTLKKTTLENKNKTISTMSTTMSTTTTTSATTNTKITTKINKPLKKVNRYDLPETKFQLQTFIYDDKLIEILNKKSCLKCQSPTNYNKWFSLIDTTNPSPYKIEYSWMYDPYLLYNKSQLLEFYDERIFKEYPSSSTLSSSTTTNDYDKISFTFSMASQGFQFFILPDAWLVKMNDNEDNDNDNDGNNNLIFNNLNNNNNNNEYNENFYIVCNSILPDSKIKNNHNPHKKLFNEPLTNEC.

Residues 1–29 (MSYLPLYNNNNNINNNNNNNNNRINNNKE) form a disordered region. At 1-36 (MSYLPLYNNNNNINNNNNNNNNRINNNKEKGVKNKP) the chain is on the cytoplasmic side. Low complexity predominate over residues 8–25 (NNNNNINNNNNNNNNRIN). Residues 37 to 57 (FQIFISIVFIVFLCFFLIWSM) form a helical; Signal-anchor for type II membrane protein membrane-spanning segment. Topologically, residues 58-550 (EAKKDKNIKI…LFNEPLTNEC (493 aa)) are extracellular. Positions 81–97 (LINEPINNNKNNKNNIP) are enriched in low complexity. Residues 81–100 (LINEPINNNKNNKNNIPKNH) form a disordered region. 3 N-linked (GlcNAc...) asparagine glycosylation sites follow: asparagine 233, asparagine 322, and asparagine 426.

This sequence belongs to the glycosyltransferase 8 family. Highly divergent.

The protein localises to the membrane. The sequence is that of Glycosyltransferase-like protein gnt12 (gnt12) from Dictyostelium discoideum (Social amoeba).